The following is a 1118-amino-acid chain: Protein argonaute 1B (1118 aa).

Disordered regions lie at residues 1 to 175 (MALQ…SRTV) and 188 to 246 (APMV…RFPL). The segment covering 10 to 24 (PHHHQVPIMVKKKRT) has biased composition (basic residues). Residues 25–35 (GSGSTGESSGE) are compositionally biased toward low complexity. Composition is skewed to gly residues over residues 54–92 (QHGG…HHPG), 100–110 (GRGGPGSHHPG), and 118–128 (GRGGSGSHHPG). 2 stretches are compositionally biased toward low complexity: residues 148–157 (RGGMPQPYYG) and 193–219 (PTPS…QFQQ). A compositionally biased stretch (polar residues) spans 220 to 241 (LATRDQSSTSQAIQIAPPSSKS). The PAZ domain maps to 457–570 (PVIDFVAQLL…LPMEVCKIVE (114 aa)). The region spanning 746 to 1067 (LLIVILPDNN…AAFRARFYME (322 aa)) is the Piwi domain.

This sequence belongs to the argonaute family. Ago subfamily.

Its function is as follows. Probably involved in the RNA silencing pathway. May bind to short RNAs such as microRNAs (miRNAs) or short interfering RNAs (siRNAs), and represses the translation of mRNAs which are complementary to them. The sequence is that of Protein argonaute 1B (AGO1B) from Oryza sativa subsp. japonica (Rice).